The sequence spans 261 residues: Ribosome biogenesis protein nsa2 (261 aa).

Basic and acidic residues-rich tracts occupy residues 1 to 36 (MPQN…HKQS) and 66 to 82 (KQHE…EKDP). Disordered regions lie at residues 1–44 (MPQN…NLRG) and 64–97 (AIKQ…SNPT). The short motif at 15-22 (GKRLDTEE) is the Nuclear localization signal element.

Belongs to the eukaryotic ribosomal protein eS8 family. Ribosome biogenesis protein NSA2 subfamily. Component of the pre-66S ribosomal particle. Interacts with nop7 and rrp1. Interacts with rsa4 (via WD repeats).

It localises to the nucleus. The protein resides in the nucleolus. Functionally, involved in the biogenesis of the 60S ribosomal subunit. May play a part in the quality control of pre-60S particles. In Neurospora crassa (strain ATCC 24698 / 74-OR23-1A / CBS 708.71 / DSM 1257 / FGSC 987), this protein is Ribosome biogenesis protein nsa2 (rbg-52).